Consider the following 582-residue polypeptide: Vesicular glutamate transporter 2 (582 aa).

The Cytoplasmic segment spans residues 1 to 71; sequence MESVKQRILA…CTCFGLPRRY (71 aa). The helical transmembrane segment at 72-92 threads the bilayer; that stretch reads IIAIMSGLGFCISFGIRCNLG. The Vesicular segment spans residues 93–125; the sequence is VAIVDMVNNSTIHRGGKVIKEKAKFNWDPETVG. 2 N-linked (GlcNAc...) asparagine glycosylation sites follow: Asn-100 and Asn-101. Residues 126-146 form a helical membrane-spanning segment; the sequence is MIHGSFFWGYIITQIPGGYIA. Residues 147–148 are Cytoplasmic-facing; it reads SR. Residues 149 to 169 form a helical membrane-spanning segment; that stretch reads LAANRVFGAAILLTSTLNMLI. The Vesicular segment spans residues 170-177; it reads PSAARVHY. The helical transmembrane segment at 178–198 threads the bilayer; it reads GCVIFVRILQGLVEGVTYPAC. The Cytoplasmic segment spans residues 199–216; it reads HGIWSKWAPPLERSRLAT. A helical transmembrane segment spans residues 217 to 237; that stretch reads TSFCGSYAGAVIAMPLAGILV. At 238–244 the chain is on the vesicular side; it reads QYTGWSS. A helical transmembrane segment spans residues 245 to 265; that stretch reads VFYVYGSFGMVWYMFWLLVSY. Topologically, residues 266 to 310 are cytoplasmic; it reads ESPAKHPTITDEERRYIEESIGESANLLGAMEKFKTPWRKFFTSM. The helical transmembrane segment at 311–331 threads the bilayer; that stretch reads PVYAIIVANFCRSWTFYLLLI. Topologically, residues 332–349 are vesicular; that stretch reads SQPAYFEEVFGFEISKVG. A helical membrane pass occupies residues 350-370; it reads MLSAVPHLVMTIIVPIGGQIA. Residues 371-386 lie on the Cytoplasmic side of the membrane; the sequence is DFLRSKQILSTTTVRK. The chain crosses the membrane as a helical span at residues 387-407; the sequence is IMNCGGFGMEATLLLVVGYSH. Residues 408 to 409 lie on the Vesicular side of the membrane; that stretch reads TR. A helical transmembrane segment spans residues 410–430; that stretch reads GVAISFLVLAVGFSGFAISGF. Over 431–443 the chain is Cytoplasmic; the sequence is NVNHLDIAPRYAS. Residues 444–464 form a helical membrane-spanning segment; that stretch reads ILMGISDGVGTLSGMVCPIIV. The Vesicular portion of the chain corresponds to 465–477; that stretch reads GAMTKNKSREEWQ. N-linked (GlcNAc...) asparagine glycosylation occurs at Asn-470. A helical transmembrane segment spans residues 478–498; sequence YVFLIAALVHYGGVIFYALFA. At 499-582 the chain is on the cytoplasmic side; that stretch reads SGEKQPWADP…YTYKDRDDYS (84 aa).

It belongs to the major facilitator superfamily. Sodium/anion cotransporter family. VGLUT subfamily. In terms of tissue distribution, expressed in brain. Expressed in hippocampal neurons (at protein level).

The protein localises to the cytoplasmic vesicle. It is found in the secretory vesicle. Its subcellular location is the synaptic vesicle membrane. It localises to the synapse. The protein resides in the synaptosome. The protein localises to the cell membrane. It carries out the reaction L-glutamate(out) = L-glutamate(in). The enzyme catalyses K(+)(in) + H(+)(out) = K(+)(out) + H(+)(in). It catalyses the reaction 3 Na(+)(out) + phosphate(out) = 3 Na(+)(in) + phosphate(in). The catalysed reaction is phosphate(in) = phosphate(out). It carries out the reaction chloride(in) = chloride(out). Its activity is regulated as follows. Chloride channel activity is allosterically activated by lumenal H(+) and Cl(-) leading to synaptic vesicles acidification. The L-glutamate transport activity is allosterically activated by lumenal H(+) and Cl(-). The allosteric requirement for H(+) efficiently prevents non-vesicular efflux across the plasma membrane. The L-glutamate uniporter activity exhibits a biphasic dependence on chloride concentration. Its function is as follows. Multifunctional transporter that transports L-glutamate as well as multiple ions such as chloride, proton, potassium, sodium and phosphate. At the synaptic vesicle membrane, mainly functions as a uniporter which transports preferentially L-glutamate but also, phosphate from the cytoplasm into synaptic vesicles at presynaptic nerve terminals of excitatory neural cells. The L-glutamate or phosphate uniporter activity is electrogenic and is driven by the proton electrochemical gradient, mainly by the electrical gradient established by the vacuolar H(+)-ATPase across the synaptic vesicle membrane. In addition, functions as a chloride channel that allows a chloride permeation through the synaptic vesicle membrane therefore affects the proton electrochemical gradient and promotes synaptic vesicles acidification. Moreover, functions as a vesicular K(+)/H(+) antiport allowing to maintain the electrical gradient and to decrease chemical gradient and therefore sustain vesicular glutamate uptake. The vesicular H(+)/H(+) antiport activity is electroneutral. At the plasma membrane, following exocytosis, functions as a symporter of Na(+) and phosphate from the extracellular space to the cytoplasm allowing synaptic phosphate homeostasis regulation. The symporter activity is driven by an inside negative membrane potential and is electrogenic. Also involved in the regulation of retinal hyaloid vessel regression during postnatal development. May also play a role in the endocrine glutamatergic system of other tissues such as pineal gland and pancreas. The chain is Vesicular glutamate transporter 2 from Mus musculus (Mouse).